The chain runs to 150 residues: Protein Smg homolog (150 aa).

It belongs to the Smg family.

The protein is Protein Smg homolog of Leptothrix cholodnii (strain ATCC 51168 / LMG 8142 / SP-6) (Leptothrix discophora (strain SP-6)).